The primary structure comprises 358 residues: Neutral protease 2 homolog PADG_00776 (358 aa).

Positions Met-1–Ala-19 are cleaved as a signal peptide. The propeptide occupies Gly-20 to Leu-185. Intrachain disulfides connect Cys-188/Cys-259 and Cys-266/Cys-284. Asn-249 is a glycosylation site (N-linked (GlcNAc...) asparagine). His-309 is a Zn(2+) binding site. The active site involves Glu-310. Zn(2+) contacts are provided by His-313 and Asp-324.

This sequence belongs to the peptidase M35 family. Requires Zn(2+) as cofactor.

The protein localises to the secreted. The enzyme catalyses Preferential cleavage of bonds with hydrophobic residues in P1'. Also 3-Asn-|-Gln-4 and 8-Gly-|-Ser-9 bonds in insulin B chain.. Its function is as follows. Secreted metalloproteinase that allows assimilation of proteinaceous substrates. Shows high activities on basic nuclear substrates such as histone and protamine. This is Neutral protease 2 homolog PADG_00776 from Paracoccidioides brasiliensis (strain Pb18).